The chain runs to 341 residues: RNA 3'-terminal phosphate cyclase (341 aa).

ATP contacts are provided by residues Gln-102 and 283–287; that span reads HLADQ. The Tele-AMP-histidine intermediate role is filled by His-308.

Belongs to the RNA 3'-terminal cyclase family. Type 1 subfamily.

It is found in the cytoplasm. It carries out the reaction a 3'-end 3'-phospho-ribonucleotide-RNA + ATP = a 3'-end 2',3'-cyclophospho-ribonucleotide-RNA + AMP + diphosphate. Catalyzes the conversion of 3'-phosphate to a 2',3'-cyclic phosphodiester at the end of RNA. The mechanism of action of the enzyme occurs in 3 steps: (A) adenylation of the enzyme by ATP; (B) transfer of adenylate to an RNA-N3'P to produce RNA-N3'PP5'A; (C) and attack of the adjacent 2'-hydroxyl on the 3'-phosphorus in the diester linkage to produce the cyclic end product. The biological role of this enzyme is unknown but it is likely to function in some aspects of cellular RNA processing. The chain is RNA 3'-terminal phosphate cyclase from Pseudomonas aeruginosa (strain LESB58).